The sequence spans 333 residues: D-fructose 1,6-bisphosphatase class 2/sedoheptulose 1,7-bisphosphatase (333 aa).

Mn(2+) contacts are provided by D33, E57, D85, and E88. Residues 88–90 (EGT), Y119, 164–166 (RTR), and 186–188 (DGD) contribute to the substrate site. E213 serves as a coordination point for Mn(2+).

This sequence belongs to the FBPase class 2 family. As to quaternary structure, homotetramer. Mn(2+) is required as a cofactor.

The catalysed reaction is beta-D-fructose 1,6-bisphosphate + H2O = beta-D-fructose 6-phosphate + phosphate. The enzyme catalyses D-sedoheptulose 1,7-bisphosphate + H2O = D-sedoheptulose 7-phosphate + phosphate. The protein operates within carbohydrate biosynthesis; Calvin cycle. In terms of biological role, catalyzes the hydrolysis of fructose 1,6-bisphosphate (Fru 1,6-P2) and sedoheptulose 1,7-bisphosphate (Sed 1,7-P2) to fructose 6-phosphate and sedoheptulose 7-phosphate, respectively. This chain is D-fructose 1,6-bisphosphatase class 2/sedoheptulose 1,7-bisphosphatase, found in Prochlorococcus marinus (strain AS9601).